A 137-amino-acid chain; its full sequence is Ciliary microtubule inner protein 1 (137 aa).

Expressed in airway epithelial cells, renal tubular cells, pancreatic acinar cells and epithelial cells of the stomach, duodenum, and gallbladder (at protein level).

The protein resides in the cell projection. It is found in the cilium. The chain is Ciliary microtubule inner protein 1 from Homo sapiens (Human).